Here is a 187-residue protein sequence, read N- to C-terminus: Elongation factor P (187 aa).

It belongs to the elongation factor P family.

It is found in the cytoplasm. Its pathway is protein biosynthesis; polypeptide chain elongation. Its function is as follows. Involved in peptide bond synthesis. Stimulates efficient translation and peptide-bond synthesis on native or reconstituted 70S ribosomes in vitro. Probably functions indirectly by altering the affinity of the ribosome for aminoacyl-tRNA, thus increasing their reactivity as acceptors for peptidyl transferase. This Jannaschia sp. (strain CCS1) protein is Elongation factor P.